We begin with the raw amino-acid sequence, 2248 residues long: Putative Polycomb group protein ASXL3 (2248 aa).

Residues 10–84 (RTWAEAARLA…KSGLYALKKE (75 aa)) form the HTH HARE-type domain. Residues 156–232 (ALKQALRQQQ…GKQTSQHLKR (77 aa)) form a disordered region. Residues 203–216 (KNGEADSSDKEMKH) are compositionally biased toward basic and acidic residues. Residues 219–228 (KSPTGKQTSQ) are compositionally biased toward polar residues. One can recognise a DEUBAD domain in the interval 254–363 (PGSILVNTNL…FERFYGEKLG (110 aa)). Disordered regions lie at residues 368–414 (ESVK…PASP), 547–583 (TSSM…EGQF), 607–643 (CISE…CTPA), 703–726 (EASP…PLTS), 762–853 (ERMA…ASIP), 869–1052 (LQRT…TGAR), 1123–1152 (TSKE…ETKM), 1183–1203 (QQSL…VHSS), 1431–1462 (KLSA…GFAP), 1573–1596 (TAPS…ADTT), and 1990–2068 (LSPN…KRLS). 5 stretches are compositionally biased toward polar residues: residues 371-389 (KLTT…SCGT), 395-407 (SAQT…QPKS), 564-580 (AVET…SSLE), 607-617 (CISETSFSSES), and 624-643 (SLPS…CTPA). Over residues 796–818 (NLTSQQKNLSNTPEPIIMSSSSI) the composition is skewed to polar residues. The span at 937 to 949 (SHTSKSSEPSKSP) shows a compositional bias: low complexity. 3 stretches are compositionally biased toward basic and acidic residues: residues 950–968 (DGIR…KTAE), 975–987 (CKEK…DDQS), and 997–1008 (PEKEQPPREEPR). A compositionally biased stretch (polar residues) spans 1036 to 1046 (RASTSTSVSGG). The segment covering 2016-2046 (HPPPPPPPPPPPPLALPPPPPPPPPLPPPLP) has biased composition (pro residues). The segment at 2210–2247 (ELKCSCRLKAMIVCKGCGAFCHDDCIGPSKLCVACLVV) adopts a PHD-type; atypical zinc-finger fold.

This sequence belongs to the Asx family. Core component of the polycomb repressive deubiquitinase (PR-DUB) complex, at least composed of BAP1, one of ASXL1, ASXL2 or (probably) ASXL3, and one of MBD5 or MBD6. Distinct combinations of ASXL and MBD proteins may preferentially bind specific histone modification marks. The PR-DUB core associates with a number of accessory proteins, including FOXK1, FOXK2, KDM1B, HCFC1 and OGT; KDM1B specifically associates with ASXL2 PR-DUB complexes. Interacts (via PHD domain) with MBD5 and MBD6 (via MBD domain); the interaction is probably direct and mediates association of MBD proteins with the PR-DUB core. Expressed in pancreatic islets, testis, neuroblastoma, head and neck tumor.

The protein resides in the nucleus. In terms of biological role, putative Polycomb group (PcG) protein. PcG proteins act by forming multiprotein complexes, which are required to maintain the transcriptionally repressive state of homeotic genes throughout development. PcG proteins are not required to initiate repression, but to maintain it during later stages of development. They probably act via methylation of histones, rendering chromatin heritably changed in its expressibility. Non-catalytic component of the PR-DUB complex, a complex that specifically mediates deubiquitination of histone H2A monoubiquitinated at 'Lys-119' (H2AK119ub1). The PR-DUB complex is an epigenetic regulator of gene expression and acts as a transcriptional coactivator, affecting genes involved in development, cell communication, signaling, cell proliferation and cell viability. ASXL1, ASXL2 and ASXL3 function redundantly in the PR-DUB complex and are essential for chromatin recruitment and transcriptional activation of associated genes. The sequence is that of Putative Polycomb group protein ASXL3 (ASXL3) from Homo sapiens (Human).